The chain runs to 295 residues: Nucleotide-binding protein PEPE_0450 (295 aa).

12–19 is a binding site for ATP; that stretch reads GMSGAGKT. 62 to 65 is a binding site for GTP; it reads DLRS.

Belongs to the RapZ-like family.

Functionally, displays ATPase and GTPase activities. The protein is Nucleotide-binding protein PEPE_0450 of Pediococcus pentosaceus (strain ATCC 25745 / CCUG 21536 / LMG 10740 / 183-1w).